A 281-amino-acid polypeptide reads, in one-letter code: N-methyltransferase tcpN (281 aa).

This sequence belongs to the methyltransferase superfamily. LaeA methyltransferase family.

It participates in secondary metabolite biosynthesis. In terms of biological role, N-methyltransferase; part of the gene cluster that mediates the biosynthesis of an unusual class of epipolythiodioxopiperazines (ETPs) lacking the reactive thiol group important for toxicity. Firstly, L-tyrosine is prenylated by tcpD, before undergoing condensation with L-glycine in a reaction catalyzed by the NRPS tcpP leading to the diketopiperazine (DKP) backbone. Afterwards the alpha-carbon of tyrosine is oxidized by the cytochrome P450 tcpC to form a hydroxyl group. However, in contrast other ETP biosynthesis pathways studied so far, tcpC is not able to bishydroxylate the DKP at both alpha-carbon positions, but hydroxylates the alpha-carbon of the tyrosine part and the nitrogen of the glycine part. The next steps involve an alpha,beta-elimination reaction catalyzed by tcpI, a methylation by the methyltransferase tcpN the action of the four enzyme cascade tcpG/K/J/I. Due to a dysfunctional cytochrome P450 monooxygenase tcpC, the pathway leads to the biosynthesis of probable non-toxic metabolites lacking the reactive thiol group. The protein is N-methyltransferase tcpN of Claviceps purpurea (strain 20.1) (Ergot fungus).